The following is a 151-amino-acid chain: UPF0178 protein CPS_3584 (151 aa).

This sequence belongs to the UPF0178 family.

The polypeptide is UPF0178 protein CPS_3584 (Colwellia psychrerythraea (strain 34H / ATCC BAA-681) (Vibrio psychroerythus)).